The sequence spans 123 residues: Small ribosomal subunit protein uS12 (123 aa).

At Asp-89 the chain carries 3-methylthioaspartic acid. Positions 101–123 are disordered; sequence SLDTSGVKDRKQGRSKYGAKRPK. Over residues 113–123 the composition is skewed to basic residues; the sequence is GRSKYGAKRPK.

It belongs to the universal ribosomal protein uS12 family. Part of the 30S ribosomal subunit. Contacts proteins S8 and S17. May interact with IF1 in the 30S initiation complex.

Functionally, with S4 and S5 plays an important role in translational accuracy. Its function is as follows. Interacts with and stabilizes bases of the 16S rRNA that are involved in tRNA selection in the A site and with the mRNA backbone. Located at the interface of the 30S and 50S subunits, it traverses the body of the 30S subunit contacting proteins on the other side and probably holding the rRNA structure together. The combined cluster of proteins S8, S12 and S17 appears to hold together the shoulder and platform of the 30S subunit. In Azotobacter vinelandii (strain DJ / ATCC BAA-1303), this protein is Small ribosomal subunit protein uS12.